We begin with the raw amino-acid sequence, 40 residues long: Cytochrome b6-f complex subunit 5 (40 aa).

A helical transmembrane segment spans residues 5-25; the sequence is ILLGMVLGFVPVTIAGLLVAA.

The protein belongs to the PetG family. As to quaternary structure, the 4 large subunits of the cytochrome b6-f complex are cytochrome b6, subunit IV (17 kDa polypeptide, PetD), cytochrome f and the Rieske protein, while the 4 small subunits are PetG, PetL, PetM and PetN. The complex functions as a dimer.

Its subcellular location is the cell inner membrane. Functionally, component of the cytochrome b6-f complex, which mediates electron transfer between photosystem II (PSII) and photosystem I (PSI), cyclic electron flow around PSI, and state transitions. PetG is required for either the stability or assembly of the cytochrome b6-f complex. The polypeptide is Cytochrome b6-f complex subunit 5 (Gloeobacter violaceus (strain ATCC 29082 / PCC 7421)).